Consider the following 363-residue polypeptide: Putative dipeptidase YkvY (363 aa).

Mn(2+) contacts are provided by Asp222, Asp233, His297, Glu326, and Glu340.

It belongs to the peptidase M24B family. It depends on Mn(2+) as a cofactor.

This chain is Putative dipeptidase YkvY (ykvY), found in Bacillus subtilis (strain 168).